Reading from the N-terminus, the 171-residue chain is Envelope glycoprotein N (171 aa).

Over 1–132 (MARINSNSGT…CSALKYRIYV (132 aa)) the chain is Virion surface. Residues 133 to 153 (SSFVSVLNIILYVLLFLASVV) traverse the membrane as a helical segment. At 154 to 171 (YIRYLCHQSITTETVKDY) the chain is on the intravirion side.

It belongs to the herpesviridae glycoprotein N family. In terms of assembly, interacts (via N-terminus) with gM (via N-terminus). The gM-gN heterodimer forms the gCII complex.

It localises to the virion membrane. The protein resides in the host membrane. It is found in the host Golgi apparatus. Its subcellular location is the host trans-Golgi network. In terms of biological role, envelope glycoprotein necessary for proper maturation of gM and modulation of its membrane fusion activity. Also plays a critical role in virion morphogenesis. This chain is Envelope glycoprotein N, found in Elephas maximus (Indian elephant).